A 461-amino-acid chain; its full sequence is Bifunctional protein GlmU (461 aa).

The segment at 1 to 234 (MSLSVVILAA…EIEVEGANNR (234 aa)) is pyrophosphorylase. Residues 8-11 (LAAG), Lys22, Gln77, 82-83 (GT), 104-106 (YGD), Gly141, Glu159, Asn174, and Asn232 contribute to the UDP-N-acetyl-alpha-D-glucosamine site. Asp106 is a Mg(2+) binding site. Asn232 is a binding site for Mg(2+). The interval 235–255 (VQLATLERAYQARIAEELMIA) is linker. Residues 256 to 461 (GASLRDPARI…AGWQRPVKKS (206 aa)) form an N-acetyltransferase region. The UDP-N-acetyl-alpha-D-glucosamine site is built by Arg338 and Lys356. The active-site Proton acceptor is the His368. The UDP-N-acetyl-alpha-D-glucosamine site is built by Tyr371 and Asn382. Residues Ala385, 391–392 (NY), Ser410, Ala428, and Arg445 each bind acetyl-CoA.

This sequence in the N-terminal section; belongs to the N-acetylglucosamine-1-phosphate uridyltransferase family. The protein in the C-terminal section; belongs to the transferase hexapeptide repeat family. Homotrimer. Mg(2+) is required as a cofactor.

It is found in the cytoplasm. The catalysed reaction is alpha-D-glucosamine 1-phosphate + acetyl-CoA = N-acetyl-alpha-D-glucosamine 1-phosphate + CoA + H(+). The enzyme catalyses N-acetyl-alpha-D-glucosamine 1-phosphate + UTP + H(+) = UDP-N-acetyl-alpha-D-glucosamine + diphosphate. Its pathway is nucleotide-sugar biosynthesis; UDP-N-acetyl-alpha-D-glucosamine biosynthesis; N-acetyl-alpha-D-glucosamine 1-phosphate from alpha-D-glucosamine 6-phosphate (route II): step 2/2. The protein operates within nucleotide-sugar biosynthesis; UDP-N-acetyl-alpha-D-glucosamine biosynthesis; UDP-N-acetyl-alpha-D-glucosamine from N-acetyl-alpha-D-glucosamine 1-phosphate: step 1/1. It functions in the pathway bacterial outer membrane biogenesis; LPS lipid A biosynthesis. Its function is as follows. Catalyzes the last two sequential reactions in the de novo biosynthetic pathway for UDP-N-acetylglucosamine (UDP-GlcNAc). The C-terminal domain catalyzes the transfer of acetyl group from acetyl coenzyme A to glucosamine-1-phosphate (GlcN-1-P) to produce N-acetylglucosamine-1-phosphate (GlcNAc-1-P), which is converted into UDP-GlcNAc by the transfer of uridine 5-monophosphate (from uridine 5-triphosphate), a reaction catalyzed by the N-terminal domain. The polypeptide is Bifunctional protein GlmU (Colwellia psychrerythraea (strain 34H / ATCC BAA-681) (Vibrio psychroerythus)).